The primary structure comprises 1913 residues: MIFKSFLLGNLGSLYIKIINSVVVVGLYYGFLTTFSIGPSYFFLLRARIMEEGTEREVSATTGFITGQLMMFISIYYAPLHLALGRPHTITVLVIPYLLFHFFSNNQKQFFDYGSTTRNSMRNLSIQCVFLTNLIFQLFNHLMLPSSTLARLVNIYMFRCNNKMLFVTSSFVGWLIGHILFMKWVGLVVSWIRQNHSIRSNVLIRSNKYLGLKLKSAIAQILSIIFFIACVNYLARLPDPSVTKKLNETSKTETEEEESKESQKSKESEEERDVEKETTSETKETKQEQEGSTEQDPSPYWEEKEDPDKIDETEEIRVNGKEKKKDETEEIRVNGKEKKKDEFRFHFKETDYKRSPGYENSYLDGYQDNWDLQSEEEEEEESTLGFEKPLVTCLFDYKRWNRPFRYIKNKTFENAIRDEMSQYFFYTCLNNGKKKISFTYPPSLATFSEIIERKMSLYTTKKLTDDDLYSHWVSNNEEKKNNLSNELINRIKVLDKGSLAPDVLEKRTRLCDDENEQECLPKKYDPLLNGSYRGRIKKLESESTRNDSIISAKGSLEKIWKNKIHSLITNDSREFEHQMDPFDGESLSAYMTHSLTSISKLSLELVSIFHFEDLALLTEQKRIDFENQTKRLKFLFDVITADANNQTIENKFIEIEKIDKKIPRWVYKLISEEDYLAQQEQQEEENEEEAPLDFGIRSRKGRRVVIYTDKNQNRDQDPNPNTDNTTTENDNSDTGEEIALIRYAQQSDFSRDLINGSIRAKRRKIVLWEMLQANAHSPLFLDQVAKMVSFDLFDDLRETMNLIFRNWITKEPELQILDSEEKEDREKLIKIREEDERIIISETWDNVMCAQAIRGCMLVTHSFIRKYIILPLLIIAKNIGRILLFQLSEWDEDFKDWNREMHVKCTYNGVQLSETEFPQNWLKDGIQIKILFPFSLKPWRESKATPSTGGLMKEKKRKNDDFCFLTVWGMEAELPFGPPRNRPSFFKPIFEELDTNIRKVENQSFVFKEKTKDFLKKKTGWVTKIVLLKNKIRNFFTKVNPNLLFGLKKVYEPSENQKDSIISNKITHESTVQIPSSNWTNYSPIEKKMKDLSDRTITTRSQIERITKDKQKGFLTSDINIRSNETSCNAKRTELQKDILRIAKKRSIRFIRKLHSFVKSFIERIYLDIFLCTINIPRINLQLFFESIKKILNKSISNDERNKEKIDETNQNTIHFISTIRNSFSNSNLNNKSKIYWDFSLLSQAYVLYKLSQTQVIKRYQLKSVLQYHRAYPFLKDRIKDLFGTPRIVHAKSRPKKLPISRINAWKNWLRGHYQYNLSQTRWSELVPKKWREKFNQRTIKNKYSRKLNSSEKEKNQQAHYAKEISYVVDSLSSQKGKLKKDYRYDLLSHKYINSNYEDREYSDISRLSLQINGDREIPYDYNRQESDYVLVGLPISDYLGEEYFIGVDKNSDRKYFDRRILRFDLRKDLNIKTQINRDTETNMNKNGTNNYPAIGKKNPFSLPIHQEINSSKKKKQKFFDWMGMREEILYRPISNLEPWFFPEFVLRYDAYKSKPRIISIKSLLLDSQKDERNEIISKTKNINKKNQKKDLSNQKKHLEVENQEKEDFRQVDLRPNPTNQRDPIVSDTRNQQKDIEEDSVGSGVKKRRKKKKFKSKKEAELDFFLKKYLLFQLRWDELLNKKMMTNIKVYCLLLRLKNLKEIAISSIERGEMCLDLMLMQKDLSLRELIKKGIFIIEPIRLSRKWDGKLIMYQTIGISLVAENKDPINIRCRKKGYADENSFNKSVRQQEKMLVDRDENDYDLLVPENILSPRRRRELRILICFNSGNESAVDGNSVFYNNKNVESCRQFLDEDKHLDTDAKKFMKLKFFLWPNYRLEDLACMNRYWFDTTNGSRFSMLRIHMYPRFLISWW.

5 helical membrane passes run 18–38 (IINS…FSIG), 64–84 (FITG…HLAL), 124–144 (LSIQ…HLML), 172–192 (VGWL…VSWI), and 214–234 (LKSA…VNYL). Disordered regions lie at residues 245–330 (KLNE…ETEE), 707–734 (YTDK…NSDT), and 1605–1652 (EKED…RKKK). Residues 260–289 (KESQKSKESEEERDVEKETTSETKETKQEQ) show a composition bias toward basic and acidic residues. The span at 303–314 (EKEDPDKIDETE) shows a compositional bias: acidic residues. Residues 315–330 (EIRVNGKEKKKDETEE) are compositionally biased toward basic and acidic residues. Over residues 718–729 (PNPNTDNTTTEN) the composition is skewed to low complexity.

The protein belongs to the TIC214 family. In terms of assembly, part of the Tic complex.

It localises to the plastid. The protein resides in the chloroplast inner membrane. Its function is as follows. Involved in protein precursor import into chloroplasts. May be part of an intermediate translocation complex acting as a protein-conducting channel at the inner envelope. This Acorus calamus var. americanus (American sweet flag) protein is Protein TIC 214.